Here is an 862-residue protein sequence, read N- to C-terminus: Switch 2 (862 aa).

Disordered regions lie at residues 13–43 and 58–95; these read PCGSFPSSSSLRVSSTQELEPSRKPPKSSLS and KHESKISKTQVEDFDHNEDDHKRNIKFDEEEVDEDDER. Low complexity predominate over residues 16–27; it reads SFPSSSSLRVSS. Over residues 58-84 the composition is skewed to basic and acidic residues; that stretch reads KHESKISKTQVEDFDHNEDDHKRNIKF. A compositionally biased stretch (acidic residues) spans 85 to 95; that stretch reads DEEEVDEDDER. One can recognise a Helicase ATP-binding domain in the interval 151–323; it reads YNLYKNNHGG…FNLFEWVAPG (173 aa). 164 to 171 is an ATP binding site; that stretch reads DDMGLGKT. Residues 274–277 carry the DEAH box motif; it reads DEAH. A coiled-coil region spans residues 274-294; sequence DEAHRLKNEKSKLYEACLEIK. The Helicase C-terminal domain occupies 532 to 685; it reads ALEKLMASWI…VAGKMETRYF (154 aa). Residues 782–793 show a composition bias toward polar residues; it reads TTSTSQRLNGDG. Residues 782-821 are disordered; that stretch reads TTSTSQRLNGDGNSADRKKKKRKGCSEEEDMSSSNREQKR.

Belongs to the SNF2/RAD54 helicase family.

Its function is as follows. May be involved in early DNA damage response. Probable chromatin remodeling factor. This Arabidopsis thaliana (Mouse-ear cress) protein is Switch 2.